The following is a 671-amino-acid chain: Transcription factor xilB (671 aa).

Residues 11–46 constitute a DNA-binding region (zn(2)-C6 fungal-type); it reads CHSCYTRKQKASESDSICDRQYPCNHCTRRRRPEEC. Residues 48 to 90 form a disordered region; it reads YGPPPVKVPSCPPVPADQSETQPRPVESARPTRETPVDDSEAH. Over residues 49–62 the composition is skewed to pro residues; it reads GPPPVKVPSCPPVP. The segment covering 77-90 has biased composition (basic and acidic residues); that stretch reads RPTRETPVDDSEAH. The fungal transcription factor domain stretch occupies residues 148–593; the sequence is PERQIIDFLV…ATLLFARSVQ (446 aa). The disordered stretch occupies residues 629 to 650; the sequence is WPSLEAGDPYSMPDNFPSMAQD.

It localises to the nucleus. Its function is as follows. Transcription factor; part of the gene cluster that mediates the biosynthesis of the 6-methyl-2-pyrone derivative xylariolide D. May play a role in the regulation of the expression of the highly reducing polyketide synthase xilA and the cytochroe P450 monooxygenase xilC. This Penicillium rubens (strain ATCC 28089 / DSM 1075 / NRRL 1951 / Wisconsin 54-1255) (Penicillium chrysogenum) protein is Transcription factor xilB.